The sequence spans 146 residues: D-aminoacyl-tRNA deacylase (146 aa).

The Gly-cisPro motif, important for rejection of L-amino acids signature appears at glycine 138–proline 139.

It belongs to the DTD family. Homodimer.

Its subcellular location is the cytoplasm. The catalysed reaction is glycyl-tRNA(Ala) + H2O = tRNA(Ala) + glycine + H(+). It catalyses the reaction a D-aminoacyl-tRNA + H2O = a tRNA + a D-alpha-amino acid + H(+). Functionally, an aminoacyl-tRNA editing enzyme that deacylates mischarged D-aminoacyl-tRNAs. Also deacylates mischarged glycyl-tRNA(Ala), protecting cells against glycine mischarging by AlaRS. Acts via tRNA-based rather than protein-based catalysis; rejects L-amino acids rather than detecting D-amino acids in the active site. By recycling D-aminoacyl-tRNA to D-amino acids and free tRNA molecules, this enzyme counteracts the toxicity associated with the formation of D-aminoacyl-tRNA entities in vivo and helps enforce protein L-homochirality. The chain is D-aminoacyl-tRNA deacylase from Xanthomonas axonopodis pv. citri (strain 306).